The sequence spans 235 residues: Isopentenyl-diphosphate Delta-isomerase I (235 aa).

K38 is a substrate binding site. Positions 42 and 54 each coordinate Mg(2+). Residues L52–L204 form the Nudix hydrolase domain. Residues R73 and K77 each coordinate substrate. Residue C89 is part of the active site. S90 lines the substrate pocket. Mg(2+)-binding residues include E149 and E151. E151 is an active-site residue.

Belongs to the IPP isomerase type 1 family. The cofactor is Mg(2+).

It carries out the reaction isopentenyl diphosphate = dimethylallyl diphosphate. Its pathway is isoprenoid biosynthesis; dimethylallyl diphosphate biosynthesis; dimethylallyl diphosphate from isopentenyl diphosphate: step 1/1. It functions in the pathway porphyrin-containing compound metabolism; chlorophyll biosynthesis. Its function is as follows. Catalyzes the 1,3-allylic rearrangement of the homoallylic substrate isopentenyl (IPP) to its highly electrophilic allylic isomer, dimethylallyl diphosphate (DMAPP). The polypeptide is Isopentenyl-diphosphate Delta-isomerase I (IPI1) (Camptotheca acuminata (Happy tree)).